We begin with the raw amino-acid sequence, 983 residues long: Isoleucine--tRNA ligase (983 aa).

A 'HIGH' region motif is present at residues 61–71 (PYANGELHVGH). Glu-608 is an L-isoleucyl-5'-AMP binding site. The short motif at 649–653 (KMSKS) is the 'KMSKS' region element. ATP is bound at residue Lys-652. Residues Cys-952, Cys-955, Cys-972, and Cys-975 each contribute to the Zn(2+) site.

The protein belongs to the class-I aminoacyl-tRNA synthetase family. IleS type 1 subfamily. As to quaternary structure, monomer. Zn(2+) serves as cofactor.

The protein localises to the cytoplasm. It carries out the reaction tRNA(Ile) + L-isoleucine + ATP = L-isoleucyl-tRNA(Ile) + AMP + diphosphate. Its function is as follows. Catalyzes the attachment of isoleucine to tRNA(Ile). As IleRS can inadvertently accommodate and process structurally similar amino acids such as valine, to avoid such errors it has two additional distinct tRNA(Ile)-dependent editing activities. One activity is designated as 'pretransfer' editing and involves the hydrolysis of activated Val-AMP. The other activity is designated 'posttransfer' editing and involves deacylation of mischarged Val-tRNA(Ile). The polypeptide is Isoleucine--tRNA ligase (Gloeobacter violaceus (strain ATCC 29082 / PCC 7421)).